A 428-amino-acid polypeptide reads, in one-letter code: Phosphoribosylamine--glycine ligase (428 aa).

The 207-residue stretch at 107-313 (KQVMKTYNIP…LVNVIESLLD (207 aa)) folds into the ATP-grasp domain. Position 133–194 (133–194 (VEAEGVPIVI…EEYLEGEELS (62 aa))) interacts with ATP. Mg(2+) is bound by residues Glu-283 and Asn-285.

The protein belongs to the GARS family. The cofactor is Mg(2+). It depends on Mn(2+) as a cofactor.

It catalyses the reaction 5-phospho-beta-D-ribosylamine + glycine + ATP = N(1)-(5-phospho-beta-D-ribosyl)glycinamide + ADP + phosphate + H(+). Its pathway is purine metabolism; IMP biosynthesis via de novo pathway; N(1)-(5-phospho-D-ribosyl)glycinamide from 5-phospho-alpha-D-ribose 1-diphosphate: step 2/2. This Halalkalibacterium halodurans (strain ATCC BAA-125 / DSM 18197 / FERM 7344 / JCM 9153 / C-125) (Bacillus halodurans) protein is Phosphoribosylamine--glycine ligase.